Reading from the N-terminus, the 144-residue chain is Mannitol-specific phosphotransferase enzyme IIA component (144 aa).

A PTS EIIA type-2 domain is found at 3 to 142 (ELFSNDNIFL…EEIKQVFEEA (140 aa)). His-63 serves as the catalytic Tele-phosphohistidine intermediate. His-63 carries the phosphohistidine; by HPr modification.

Homodimer or homotrimer. Seems to be a monomer when not phosphorylated.

It localises to the cytoplasm. In terms of biological role, the phosphoenolpyruvate-dependent sugar phosphotransferase system (sugar PTS), a major carbohydrate active transport system, catalyzes the phosphorylation of incoming sugar substrates concomitantly with their translocation across the cell membrane. The enzyme II CmtAB PTS system is involved in D-mannitol transport. This is Mannitol-specific phosphotransferase enzyme IIA component (mtlF) from Staphylococcus aureus (strain MRSA252).